The primary structure comprises 86 residues: Small nuclear ribonucleoprotein F (86 aa).

Positions 14-86 (NPKPFLKGLV…NVLYIRELPN (73 aa)) constitute a Sm domain.

It belongs to the snRNP Sm proteins family. SmF/LSm6 subfamily. Component of the Sm core complex, present in spliceosomal snRNP U1, U2, U4/U6 and U5. The core complex contains SMB1, SMD1, SMD2, SMD3, SME1, SMX3 and SMX2 (Sm proteins B, D1, D2, D3, E, F and G, respectively), and is probably a heptameric ring structure. SMX3 specifically interacts with SME1. Belongs to the CWC complex (or CEF1-associated complex), a spliceosome sub-complex reminiscent of a late-stage spliceosome composed of the U2, U5 and U6 snRNAs and at least BUD13, BUD31, BRR2, CDC40, CEF1, CLF1, CUS1, CWC2, CWC15, CWC21, CWC22, CWC23, CWC24, CWC25, CWC27, ECM2, HSH155, IST3, ISY1, LEA1, MSL1, NTC20, PRP8, PRP9, PRP11, PRP19, PRP21, PRP22, PRP45, PRP46, SLU7, SMB1, SMD1, SMD2, SMD3, SMX2, SMX3, SNT309, SNU114, SPP2, SYF1, SYF2, RSE1 and YJU2. Component of the U4/U6-U5 tri-snRNP complex composed of the U4, U6 and U5 snRNAs and at least PRP3, PRP4, PRP6, PRP8, PRP18, PRP31, PRP38, SNU13, SNU23, SNU66, SNU114, SPP381, SMB1, SMD1, SMD2, SMD3, SMX2, SMX3, LSM2, LSM3, LSM4, LSM5, LSM6, LSM7, LSM8, BRR2 and DIB1.

The protein resides in the nucleus. It is found in the cytoplasm. Functionally, plays a role in pre-mRNA splicing as a core component of the spliceosomal U1, U2, U4 and U5 small nuclear ribonucleoproteins (snRNPs), the building blocks of the spliceosome. In Saccharomyces cerevisiae (strain ATCC 204508 / S288c) (Baker's yeast), this protein is Small nuclear ribonucleoprotein F (SMX3).